An 859-amino-acid polypeptide reads, in one-letter code: Heat shock protein 105 kDa (859 aa).

Position 2 is an N-acetylserine (Ser-2). The residue at position 471 (Lys-471) is an N6-acetyllysine. Ser-509 and Ser-510 each carry phosphoserine. 2 disordered regions span residues 515-585 (MDCQ…PPEA) and 797-859 (CEPV…MDLD). Residues 533–555 (QQDNNEAGTQPQVQTDGHQTSQS) are compositionally biased toward polar residues. Ser-558 is subject to Phosphoserine. At Thr-562 the chain carries Phosphothreonine. Basic and acidic residues-rich tracts occupy residues 564 to 585 (EENKIPDADKANEKKVDQPPEA) and 806 to 815 (PKIESPKLER). A Phosphoserine modification is found at Ser-810. Thr-816 carries the phosphothreonine modification. Residues 822–831 (TDKKEEDLDG) show a composition bias toward basic and acidic residues. The segment covering 850-859 (EKSSINMDLD) has biased composition (polar residues).

This sequence belongs to the heat shock protein 70 family. In terms of assembly, interacts with HSPA8/HSC70. Interacts with HSPA1A (via NBD) and HSPA1B (via NBD). In terms of processing, phosphorylation on Ser-509 may be important for regulation of the HSPA8/HSC70 chaperone activity.

It is found in the cytoplasm. Acts as a nucleotide-exchange factor (NEF) for chaperone proteins HSPA1A and HSPA1B, promoting the release of ADP from HSPA1A/B thereby triggering substrate release. Prevents the aggregation of denatured proteins in cells under severe stress, on which the ATP levels decrease markedly. Inhibits HSPA8/HSC70 ATPase and chaperone activities. The chain is Heat shock protein 105 kDa (HSPH1) from Bos taurus (Bovine).